A 244-amino-acid chain; its full sequence is MSLVLLPAVDVVNGEAVRLVQGEAGSETGYGSPRDAALAWQNDGAEWVHLVDLDAAFGRGSNSELLAGVIGDLTVKVELSGGIRDDASLEAALATGCARVNLGTAAIEDPEWCARALAKYGDKIAVGLDVRLVDGQYRTRGRGWVTDGGDLWETLARLDRDGCTRYVVTDVSKDGTLTGPNLELLSQVCAVTDAHVVASGGVSTIEDLLAISSLVDQGVEGAIVGKALYAGRFTLPEALAAVSG.

Residue aspartate 10 is the Proton acceptor of the active site. Residue aspartate 129 is the Proton donor of the active site.

It belongs to the HisA/HisF family.

The protein localises to the cytoplasm. It catalyses the reaction 1-(5-phospho-beta-D-ribosyl)-5-[(5-phospho-beta-D-ribosylamino)methylideneamino]imidazole-4-carboxamide = 5-[(5-phospho-1-deoxy-D-ribulos-1-ylimino)methylamino]-1-(5-phospho-beta-D-ribosyl)imidazole-4-carboxamide. It participates in amino-acid biosynthesis; L-histidine biosynthesis; L-histidine from 5-phospho-alpha-D-ribose 1-diphosphate: step 4/9. The protein is 1-(5-phosphoribosyl)-5-[(5-phosphoribosylamino)methylideneamino] imidazole-4-carboxamide isomerase of Rhodococcus erythropolis (strain PR4 / NBRC 100887).